Reading from the N-terminus, the 119-residue chain is Large ribosomal subunit protein uL22 (119 aa).

Belongs to the universal ribosomal protein uL22 family. In terms of assembly, part of the 50S ribosomal subunit.

This protein binds specifically to 23S rRNA; its binding is stimulated by other ribosomal proteins, e.g. L4, L17, and L20. It is important during the early stages of 50S assembly. It makes multiple contacts with different domains of the 23S rRNA in the assembled 50S subunit and ribosome. Its function is as follows. The globular domain of the protein is located near the polypeptide exit tunnel on the outside of the subunit, while an extended beta-hairpin is found that lines the wall of the exit tunnel in the center of the 70S ribosome. This is Large ribosomal subunit protein uL22 from Trichormus variabilis (strain ATCC 29413 / PCC 7937) (Anabaena variabilis).